The sequence spans 584 residues: MLSLTMLLLERVGLIIILAYVLMNIPYFKNLMNRRRTWKARCQLCIIFSLFALMSNLTGIVIDHQHSLSGSVYFRLDDDVSLANTRVLTIGVAGLVGGPFVGLFVGVISGIFRVYMGGADAQVYLISSIFIGIIAGYFGLQAQRRKRYPSIAKSAMIGIVMEMIQMLSILTFSHDKAYAVDLISLIALPMIIVNSVGTAIFMSIIISTLKQEEQMKAVQTHDVLQLMNQTLPYFKEGLNRESAQQIAMIIKNLMKVSAVAITSKNEILSHVGAGSDHHIPTNEILTSLSKDVLKSGKLKEVHTKEEIGCSHPNCPLRAAIVIPLEMHGSIVGTLKMYFTNPNDLTFVERQLAEGLANIFSSQIELGEAETQSKLLKDAEIKSLQAQVSPHFFFNSINTISALVRINSEKARELLLELSYFFRANLQGSKQHTITLDKELSQVRAYLSLEQARYPGRFNININVEDKYRDVLVPPFLIQILVENAIKHAFTNRKQGNDIDVSVIKETATHVRIIVQDNGQGISKDKMHLLGETSVESESGTGSALENLNLRLKGLFGKSAALQFESTSSGTTFWCVLPYERQEEE.

A run of 6 helical transmembrane segments spans residues 2–22 (LSLT…AYVL), 42–62 (CQLC…GIVI), 92–112 (VAGL…SGIF), 121–141 (AQVY…FGLQ), 154–174 (SAMI…TFSH), and 186–206 (IALP…SIII). Positions 311–363 (HPNCPLRAAIVIPLEMHGSIVGTLKMYFTNPNDLTFVERQLAEGLANIFSSQI) constitute a GAF domain. Residues 379-461 (EIKSLQAQVS…RYPGRFNINI (83 aa)) enclose the Histidine kinase domain. His390 is modified (phosphohistidine; by autocatalysis).

Post-translationally, autophosphorylated on His-390.

The protein localises to the cell membrane. The enzyme catalyses ATP + protein L-histidine = ADP + protein N-phospho-L-histidine.. Its function is as follows. Member of the two-component regulatory system LytR/LytS that regulates genes involved in autolysis, programmed cell death, biofilm formation and cell wall metabolism. Also participates in sensing and responding to host defense cationic antimicrobial peptides (HDPs). Functions as a sensor protein kinase which is autophosphorylated at a histidine residue and transfers its phosphate group to the conserved aspartic acid residue in the regulatory domain of LytR. In turn, LytR binds to the upstream promoter regions of target genes including lrgA and lrgB, to positively regulate their expression. Also possesses a phosphatase activity that dephosphorylates and thus inactivates LytR. The sequence is that of Sensor histidine kinase/phosphatase LytS (lytS) from Staphylococcus aureus (strain bovine RF122 / ET3-1).